Consider the following 100-residue polypeptide: MSHTIVLLQTTMGKSSRTFMDYESVNQAIEGICNMYEQRLKQERPNQKNITYDISQLFKFIDSLADLSCLVYTSHINAYTPYNKEWIKTKIINHLQKLAQ.

This sequence belongs to the E(R) family. Homodimer.

In terms of biological role, may have a role in the cell cycle. The chain is Enhancer of rudimentary homolog (erh) from Dictyostelium discoideum (Social amoeba).